The chain runs to 315 residues: Malate dehydrogenase (315 aa).

9–15 (GGSGNVG) contacts NAD(+). Arg84 and Arg90 together coordinate substrate. NAD(+) is bound by residues Asn97 and 120–122 (VSN). Substrate contacts are provided by Asn122 and Arg153. His177 (proton acceptor) is an active-site residue.

The protein belongs to the LDH/MDH superfamily.

The catalysed reaction is (S)-malate + NAD(+) = oxaloacetate + NADH + H(+). Catalyzes the reversible oxidation of malate to oxaloacetate. The chain is Malate dehydrogenase from Helicobacter hepaticus (strain ATCC 51449 / 3B1).